A 333-amino-acid polypeptide reads, in one-letter code: DNA-directed RNA polymerase subunit alpha (333 aa).

The segment at 1–246 (MKKMVQIKYK…AHLQVIGDVK (246 aa)) is alpha N-terminal domain (alpha-NTD). An alpha C-terminal domain (alpha-CTD) region spans residues 262–333 (VEPSIHSVDI…YNVTLNRGEK (72 aa)).

This sequence belongs to the RNA polymerase alpha chain family. Homodimer. The RNAP catalytic core consists of 2 alpha, 1 beta, 1 beta' and 1 omega subunit. When a sigma factor is associated with the core the holoenzyme is formed, which can initiate transcription.

It catalyses the reaction RNA(n) + a ribonucleoside 5'-triphosphate = RNA(n+1) + diphosphate. In terms of biological role, DNA-dependent RNA polymerase catalyzes the transcription of DNA into RNA using the four ribonucleoside triphosphates as substrates. The chain is DNA-directed RNA polymerase subunit alpha from Mycoplasmopsis pulmonis (strain UAB CTIP) (Mycoplasma pulmonis).